The primary structure comprises 201 residues: Ribonuclease HII (201 aa).

The region spanning 12 to 201 is the RNase H type-2 domain; the sequence is DLVAGVDEVG…VRELLDVSVQ (190 aa). A divalent metal cation contacts are provided by Asp-18, Glu-19, and Asp-110.

The protein belongs to the RNase HII family. It depends on Mn(2+) as a cofactor. Mg(2+) is required as a cofactor.

Its subcellular location is the cytoplasm. The catalysed reaction is Endonucleolytic cleavage to 5'-phosphomonoester.. Functionally, endonuclease that specifically degrades the RNA of RNA-DNA hybrids. This is Ribonuclease HII from Pseudomonas aeruginosa (strain LESB58).